A 432-amino-acid chain; its full sequence is GTPase HflX (432 aa).

Residues 202–367 enclose the Hflx-type G domain; the sequence is FTVALVGYTN…ELRRAVGRAM (166 aa). GTP contacts are provided by residues 208-215, 233-237, 255-258, 321-324, and 345-347; these read GYTNAGKS, FATLD, DTVG, NKID, and SAQ. S215 and T235 together coordinate Mg(2+).

It belongs to the TRAFAC class OBG-HflX-like GTPase superfamily. HflX GTPase family. In terms of assembly, monomer. Associates with the 50S ribosomal subunit. Mg(2+) is required as a cofactor.

The protein resides in the cytoplasm. In terms of biological role, GTPase that associates with the 50S ribosomal subunit and may have a role during protein synthesis or ribosome biogenesis. The chain is GTPase HflX from Magnetococcus marinus (strain ATCC BAA-1437 / JCM 17883 / MC-1).